A 225-amino-acid polypeptide reads, in one-letter code: tRNA (guanine-N(1)-)-methyltransferase (225 aa).

S-adenosyl-L-methionine is bound by residues glycine 112 and 132–137; that span reads IGDYVL.

The protein belongs to the RNA methyltransferase TrmD family. In terms of assembly, homodimer.

It is found in the cytoplasm. It catalyses the reaction guanosine(37) in tRNA + S-adenosyl-L-methionine = N(1)-methylguanosine(37) in tRNA + S-adenosyl-L-homocysteine + H(+). Its function is as follows. Specifically methylates guanosine-37 in various tRNAs. This Bacteroides thetaiotaomicron (strain ATCC 29148 / DSM 2079 / JCM 5827 / CCUG 10774 / NCTC 10582 / VPI-5482 / E50) protein is tRNA (guanine-N(1)-)-methyltransferase.